The sequence spans 464 residues: Asparagine--tRNA ligase (464 aa).

It belongs to the class-II aminoacyl-tRNA synthetase family. Homodimer.

The protein localises to the cytoplasm. The catalysed reaction is tRNA(Asn) + L-asparagine + ATP = L-asparaginyl-tRNA(Asn) + AMP + diphosphate + H(+). This chain is Asparagine--tRNA ligase, found in Xanthomonas euvesicatoria pv. vesicatoria (strain 85-10) (Xanthomonas campestris pv. vesicatoria).